Here is a 98-residue protein sequence, read N- to C-terminus: Integration host factor subunit alpha (98 aa).

The disordered stretch occupies residues 49–71 (FGNFDLRDKNQRPGRNPKTGEDI).

This sequence belongs to the bacterial histone-like protein family. As to quaternary structure, heterodimer of an alpha and a beta chain.

This protein is one of the two subunits of integration host factor, a specific DNA-binding protein that functions in genetic recombination as well as in transcriptional and translational control. The polypeptide is Integration host factor subunit alpha (Shewanella amazonensis (strain ATCC BAA-1098 / SB2B)).